The primary structure comprises 121 residues: Large ribosomal subunit protein bL12 (121 aa).

The protein belongs to the bacterial ribosomal protein bL12 family. Homodimer. Part of the ribosomal stalk of the 50S ribosomal subunit. Forms a multimeric L10(L12)X complex, where L10 forms an elongated spine to which 2 to 4 L12 dimers bind in a sequential fashion. Binds GTP-bound translation factors.

In terms of biological role, forms part of the ribosomal stalk which helps the ribosome interact with GTP-bound translation factors. Is thus essential for accurate translation. This Pelagibacter ubique (strain HTCC1062) protein is Large ribosomal subunit protein bL12.